Reading from the N-terminus, the 556-residue chain is Single-strand DNA-binding protein (556 aa).

Disordered stretches follow at residues 1 to 95 (MDPK…SEVE) and 527 to 556 (FVRP…VNSL). Composition is skewed to polar residues over residues 10–25 (ENIT…TSDF) and 36–51 (VNST…GSQE). Basic and acidic residues-rich tracts occupy residues 52-73 (TPEH…RLDA) and 539-548 (DSRRTYESRP).

As to quaternary structure, interacts with host VIP2 that promotes T-DNA integration into the host genome. Forms a complex made of virE2 and host proteins VIP1 and VBF. Forms heterodimers with the chaperone protein virE1 that prevent virE2 anarchic homopolymerization. Interacts with A.thaliana VIP1 that mediates its translocation to the host nucleus. Forms a complex made of VirE2, host VIP1 and VIP2 and single-stranded DNA (ssDNA).

It is found in the secreted. The protein localises to the host nucleus. Involved in DNA transformation; mediates the nuclear uptake of single-stranded DNA copies of the transferred DNA (T-DNA) element. Binds single-stranded but not double-stranded DNA regardless of nucleotide sequence composition. The protein is Single-strand DNA-binding protein (virE2) of Agrobacterium fabrum (strain C58 / ATCC 33970) (Agrobacterium tumefaciens (strain C58)).